Consider the following 145-residue polypeptide: Probable WRKY transcription factor 75 (145 aa).

The segment covering 20–38 (SKPELHQGEEESSKVRSEG) has biased composition (basic and acidic residues). A disordered region spans residues 20–55 (SKPELHQGEEESSKVRSEGCSKSVESSKKKGKKQRY). The WRKY DNA-binding region spans 61–126 (SQVDILDDGY…YEGVHSHPIE (66 aa)).

Belongs to the WRKY group II-c family.

It is found in the nucleus. Functionally, transcription factor. Interacts specifically with the W box (5'-(T)TGAC[CT]-3'), a frequently occurring elicitor-responsive cis-acting element. The polypeptide is Probable WRKY transcription factor 75 (WRKY75) (Arabidopsis thaliana (Mouse-ear cress)).